The primary structure comprises 105 residues: Guanidinium exporter (105 aa).

Residues 1–21 (MSWIILVIAGLLEVVWAVGLK) form a helical membrane-spanning segment. Over 22-28 (YTHGFSR) the chain is Cytoplasmic. The helical transmembrane segment at 29 to 49 (LTPSVITVTAMIVSMALLAWA) threads the bilayer. The Periplasmic portion of the chain corresponds to 50–57 (MKSLPVGT). The helical transmembrane segment at 58-78 (AYAVWTGIGAVGAAITGIVLL) threads the bilayer. The Cytoplasmic portion of the chain corresponds to 79-81 (GES). The chain crosses the membrane as a helical span at residues 82 to 102 (ANPMRLASLALIVLGIIGLKL). Over 103 to 105 (STH) the chain is Periplasmic.

The protein belongs to the drug/metabolite transporter (DMT) superfamily. Small multidrug resistance (SMR) (TC 2.A.7.1) family. Gdx/SugE subfamily.

It is found in the cell inner membrane. Guanidinium ion exporter. Couples guanidinium export to the proton motive force, exchanging one guanidinium ion for two protons. The polypeptide is Guanidinium exporter (Escherichia coli O157:H7).